The following is a 153-amino-acid chain: MDEQQLQQLTEQLSLTYFKKPFRHRAYFNSRLKTTGGRYLLNSHNIELNKKYLTEHGQKELEGIIKHELCHYHLHLEGKGYKHRDKDFRTLLKEVGAPRFCTPLEKEKKPQRKVRTYKCEACGQTFLRKRKMDTSRYVCGKCGGKIKEIIKKG.

Residues 6 to 148 (LQQLTEQLSL…CGKCGGKIKE (143 aa)) form the SprT-like domain. His-67 contributes to the Zn(2+) binding site. Residue Glu-68 is part of the active site. Residue His-71 coordinates Zn(2+).

Belongs to the SprT family. Zn(2+) serves as cofactor.

It is found in the cytoplasm. The chain is Protein SprT-like from Bacillus licheniformis (strain ATCC 14580 / DSM 13 / JCM 2505 / CCUG 7422 / NBRC 12200 / NCIMB 9375 / NCTC 10341 / NRRL NRS-1264 / Gibson 46).